The sequence spans 255 residues: 5-oxoprolinase subunit A 1 (255 aa).

This sequence belongs to the LamB/PxpA family. In terms of assembly, forms a complex composed of PxpA, PxpB and PxpC.

The enzyme catalyses 5-oxo-L-proline + ATP + 2 H2O = L-glutamate + ADP + phosphate + H(+). In terms of biological role, catalyzes the cleavage of 5-oxoproline to form L-glutamate coupled to the hydrolysis of ATP to ADP and inorganic phosphate. The chain is 5-oxoprolinase subunit A 1 from Bradyrhizobium diazoefficiens (strain JCM 10833 / BCRC 13528 / IAM 13628 / NBRC 14792 / USDA 110).